The sequence spans 635 residues: Threonine--tRNA ligase (635 aa).

Residues 1 to 61 form the TGS domain; the sequence is MINISFPDGS…DNDCKLRILT (61 aa). The tract at residues 242 to 533 is catalytic; that stretch reads DHRKLGRELD…LIEEYAGRFP (292 aa). Zn(2+) is bound by residues Cys-333, His-384, and His-510.

The protein belongs to the class-II aminoacyl-tRNA synthetase family. In terms of assembly, homodimer. The cofactor is Zn(2+).

It is found in the cytoplasm. It carries out the reaction tRNA(Thr) + L-threonine + ATP = L-threonyl-tRNA(Thr) + AMP + diphosphate + H(+). In terms of biological role, catalyzes the attachment of threonine to tRNA(Thr) in a two-step reaction: L-threonine is first activated by ATP to form Thr-AMP and then transferred to the acceptor end of tRNA(Thr). Also edits incorrectly charged L-seryl-tRNA(Thr). In Rickettsia peacockii (strain Rustic), this protein is Threonine--tRNA ligase.